The sequence spans 247 residues: Triosephosphate isomerase (247 aa).

Substrate contacts are provided by Asn10 and Lys12. Catalysis depends on His94, which acts as the Electrophile. Catalysis depends on Glu164, which acts as the Proton acceptor.

This sequence belongs to the triosephosphate isomerase family. Homodimer.

Its subcellular location is the cytoplasm. It carries out the reaction D-glyceraldehyde 3-phosphate = dihydroxyacetone phosphate. The enzyme catalyses dihydroxyacetone phosphate = methylglyoxal + phosphate. It participates in carbohydrate biosynthesis; gluconeogenesis. Its pathway is carbohydrate degradation; glycolysis; D-glyceraldehyde 3-phosphate from glycerone phosphate: step 1/1. Its function is as follows. Triosephosphate isomerase is an extremely efficient metabolic enzyme that catalyzes the interconversion between dihydroxyacetone phosphate (DHAP) and D-glyceraldehyde-3-phosphate (G3P) in glycolysis and gluconeogenesis. In terms of biological role, it is also responsible for the non-negligible production of methylglyoxal a reactive cytotoxic side-product that modifies and can alter proteins, DNA and lipids. The polypeptide is Triosephosphate isomerase (tpi-1) (Caenorhabditis elegans).